We begin with the raw amino-acid sequence, 356 residues long: Dynein regulatory complex protein 10 (356 aa).

The stretch at 126–167 (SNREFFEEVRDREERAVAEQEQLKQKLKLQRVELQKAAGTIQ) forms a coiled coil. A disordered region spans residues 173-209 (ARGEVSEVQSSTQQSRAAIEGSARAQSEADKSSFQSD). Residues 178–187 (SEVQSSTQQS) show a composition bias toward low complexity. Residues 197-287 (AQSEADKSSF…LRQLQEYNSG (91 aa)) are a coiled coil. Residues 319–348 (QNHAARVIQSYWRGFKKAREAAKKKAKKLE) enclose the IQ domain.

Belongs to the DRC10 family. Component of the nexin-dynein regulatory complex (N-DRC).

The protein localises to the cytoplasm. It localises to the cytoskeleton. It is found in the flagellum axoneme. In terms of biological role, component of the nexin-dynein regulatory complex (N-DRC), a key regulator of ciliary/flagellar motility which maintains the alignment and integrity of the distal axoneme and regulates microtubule sliding in motile axonemes. This is Dynein regulatory complex protein 10 from Chlamydomonas reinhardtii (Chlamydomonas smithii).